Reading from the N-terminus, the 162-residue chain is Glycogen accumulation regulator GarA (162 aa).

Position 21 is a phosphothreonine; by PknG (Thr-21). Thr-22 carries the post-translational modification Phosphothreonine; by PknB. Residues 77-126 (TSAGRHPDSDIFLDDVTVSRRHAEFRLENNEFNVVDVGSLNGTYVNREPV) form the FHA domain.

Monomer. Phosphorylated on Thr-22 by PknB. Phosphorylated on Thr-21 by PknG. Phosphorylation at either Thr-21 or Thr-22 prevents binding to target enzymes.

In terms of biological role, involved in regulation of glutamate metabolism. This Mycobacterium tuberculosis (strain CDC 1551 / Oshkosh) protein is Glycogen accumulation regulator GarA (garA).